A 282-amino-acid polypeptide reads, in one-letter code: MATPFLPSGATTGDSGGELSSGDDSGDMESFQTPEAEGTRSLAELFEKAAAHVQGLVQVASREQLLYLYARFKQVKVGNCNTPKPNFFDFEGKQKWEAWKALGDSSPSQAMQEYIAAVKKLDPGWNPQVSEKKGKEGSSGFGGPVVSSLYHEETIREEDKNIFDYCRENNIDHIAKAIKSKAADVNMTDEEGRALLHWACDRGHKELVKVLLQYEAGINCQDNEGQTALHYAAACEFLDIVELLLQSGADPTLRDQDGCLPEEVTGCKAVSLLLQRHRASKA.

Positions 1-39 (MATPFLPSGATTGDSGGELSSGDDSGDMESFQTPEAEGT) are disordered. Ser41 carries the post-translational modification Phosphoserine. The ACB domain maps to 42–127 (LAELFEKAAA…VKKLDPGWNP (86 aa)). An acyl-CoA is bound by residues 69-73 (YARFK) and Lys95. Position 106 is a phosphoserine (Ser106). Residue Tyr114 participates in an acyl-CoA binding. 2 ANK repeats span residues 191–220 (EGRALLHWACDRGHKELVKVLLQYEAGINC) and 224–253 (EGQTALHYAAACEFLDIVELLLQSGADPTL).

As to quaternary structure, monomer.

The protein resides in the cytoplasm. The protein localises to the nucleus. Binds long-chain acyl-coenzyme A molecules with a strong preference for unsaturated C18:1-CoA, lower affinity for unsaturated C20:4-CoA, and very weak affinity for saturated C16:0-CoA. Does not bind fatty acids. Plays a role in protein N-myristoylation. This Mus musculus (Mouse) protein is Acyl-CoA-binding domain-containing protein 6 (Acbd6).